The sequence spans 79 residues: Antimicrobial peptide UyCT1 (79 aa).

An N-terminal signal peptide occupies residues 1–23 (MKTQLAFLAITVILMQLFAQTEA). Ile37 bears the Isoleucine amide mark. Residues 41-79 (GLRNVDQIADLFDSGLSDADDLFDSGLSDADAKFMKMFM) constitute a propeptide that is removed on maturation.

This sequence belongs to the non-disulfide-bridged peptide (NDBP) superfamily. Short antimicrobial peptide (group 4) family. Expressed by the venom gland.

Its subcellular location is the secreted. The protein resides in the target cell membrane. Its function is as follows. Inhibits the growth of Gram-positive (S.aureus, MIC=15 uM) and Gram-negative bacteria (E.coli, MIC=10 uM and P.aeruginosa, MIC=10 uM). It also shows 26% of hemolysis when 15 uM are tested (81% at 50 uM). In terms of biological role, inhibits the growth of Gram-negative bacteria (E.coli, MIC=25 uM and P.aeruginosa, MIC=40 uM). It also shows 7% of hemolysis when 50 uM are tested. Does not show activity against the Gram-positive bacteria S.aureus. The protein is Antimicrobial peptide UyCT1 of Urodacus yaschenkoi (Inland robust scorpion).